Consider the following 429-residue polypeptide: D-amino acid dehydrogenase (429 aa).

Position 3-17 (3-17 (VLILGSGVIGVTSAW)) interacts with FAD.

The protein belongs to the DadA oxidoreductase family. Requires FAD as cofactor.

It catalyses the reaction a D-alpha-amino acid + A + H2O = a 2-oxocarboxylate + AH2 + NH4(+). It participates in amino-acid degradation; D-alanine degradation; NH(3) and pyruvate from D-alanine: step 1/1. Functionally, oxidative deamination of D-amino acids. The sequence is that of D-amino acid dehydrogenase from Xanthomonas euvesicatoria pv. vesicatoria (strain 85-10) (Xanthomonas campestris pv. vesicatoria).